A 30-amino-acid chain; its full sequence is Photosystem I reaction center subunit XII (30 aa).

A helical transmembrane segment spans residues 7–29 (LIAFFLAFTAGILAIKLGQALYD).

It belongs to the PsaM family.

The protein localises to the plastid. The protein resides in the chloroplast thylakoid membrane. In Pinus thunbergii (Japanese black pine), this protein is Photosystem I reaction center subunit XII.